Reading from the N-terminus, the 82-residue chain is Protein Vpu (82 aa).

The Extracellular segment spans residues 1–7 (MQPLQIS). The helical transmembrane segment at 8 to 28 (AIVALVVAAIIAIVVWSIALL) threads the bilayer. Topologically, residues 29–82 (EYRKLLRQRKIDRLIDRIRERAEDSGNESEGDQEELSALVEMGGHDAPWDIDDL) are cytoplasmic. Phosphoserine; by host CK2 is present on residues S53 and S57.

This sequence belongs to the HIV-1 VPU protein family. In terms of assembly, homopentamer. Interacts with host CD4 and BRTC; these interactions induce proteasomal degradation of CD4. Interacts with host BST2; this interaction leads to the degradation of host BST2. Interacts with host FBXW11. Interacts with host AP1M1; this interaction plays a role in the mistrafficking and subsequent degradation of host BST2. Interacts with host RANBP2; this interaction allows Vpu to down-regulate host BLM sumoylation. In terms of processing, phosphorylated by host CK2. This phosphorylation is necessary for interaction with human BTRC and degradation of CD4.

It localises to the host membrane. Its activity is regulated as follows. Ion channel activity is inhibited by hexamethylene amiloride in vitro. In terms of biological role, enhances virion budding by targeting host CD4 and Tetherin/BST2 to proteasome degradation. Degradation of CD4 prevents any unwanted premature interactions between viral Env and its host receptor CD4 in the endoplasmic reticulum. Degradation of antiretroviral protein Tetherin/BST2 is important for virion budding, as BST2 tethers new viral particles to the host cell membrane. Mechanistically, Vpu bridges either CD4 or BST2 to BTRC, a substrate recognition subunit of the Skp1/Cullin/F-box protein E3 ubiquitin ligase, induces their ubiquitination and subsequent proteasomal degradation. The alteration of the E3 ligase specificity by Vpu seems to promote the degradation of host IKBKB, leading to NF-kappa-B down-regulation and subsequent apoptosis. Acts as a viroporin that forms an oligomeric ion channel in membranes. Modulates the host DNA repair mechanisms to promote degradation of nuclear viral cDNA in cells that are already productively infected in order to suppress immune sensing and proviral hyper-integration (superinfection). Manipulates PML-NBs and modulates SUMOylation of host BLM protein thereby enhancing its DNA-end processing activity toward viral unintegrated linear DNA. Also inhibits RAD52-mediated homologous repair of viral cDNA, preventing the generation of dead-end circular forms of single copies of the long terminal repeat and permitting sustained nucleolytic attack. This Homo sapiens (Human) protein is Protein Vpu.